The sequence spans 162 residues: uncharacterized protein (162 aa).

The next 3 membrane-spanning stretches (helical) occupy residues L7 to L27, L51 to G71, and T134 to G154.

The protein belongs to the DedA family.

The protein resides in the cell membrane. This is an uncharacterized protein from Bacillus subtilis (strain 168).